Consider the following 726-residue polypeptide: WD repeat and coiled-coil-containing protein (726 aa).

2 WD repeats span residues 55-98 (GQFE…SDKN) and 154-194 (KSSG…LNAC). The segment at 502-574 (RSYDGDQSPT…PNFIQPSDVS (73 aa)) is disordered. Residues 506–515 (GDQSPTSSAN) show a composition bias toward polar residues. Residues 517-533 (FDEKRNRLRMESFDTEP) are compositionally biased toward basic and acidic residues. The segment covering 550 to 574 (SGSTSPKSECQNSSPPNFIQPSDVS) has biased composition (polar residues). Residues 581 to 609 (SISRNVERLCCNFAHLQQHLSELTDITRN) adopt a coiled-coil conformation.

This chain is WD repeat and coiled-coil-containing protein (wdcp), found in Xenopus laevis (African clawed frog).